The following is a 495-amino-acid chain: Anaerobic nitric oxide reductase flavorubredoxin (495 aa).

The zinc metallo-hydrolase stretch occupies residues 30-210; sequence HKGTSYNSYL…PFSPLVTAKI (181 aa). Positions 79, 81, 83, 147, 166, and 227 each coordinate Fe cation. In terms of domain architecture, Flavodoxin-like spans 254–393; it reads ITLFYDSMSN…ECREHGRQLA (140 aa). FMN contacts are provided by residues 260-264 and 342-369; these read SMSNN and AFGSYGWTGGAVDRIQTRLMDAGFDISI. Positions 438-489 constitute a Rubredoxin-like domain; sequence DQAMLCTVCQWVYDPAQGEPDQLVAPGTPWAQVPDSFLCPGCGIGKEVFEPC. Residues C443, C446, C476, and C479 each contribute to the Fe cation site.

In the N-terminal section; belongs to the zinc metallo-hydrolase group 3 family. In terms of assembly, homotetramer. Requires Fe cation as cofactor. It depends on FMN as a cofactor.

It is found in the cytoplasm. The protein operates within nitrogen metabolism; nitric oxide reduction. In terms of biological role, anaerobic nitric oxide reductase; uses NADH to detoxify nitric oxide (NO), protecting several 4Fe-4S NO-sensitive enzymes. Has at least 2 reductase partners, only one of which (NorW, flavorubredoxin reductase) has been identified. NO probably binds to the di-iron center; electrons enter from the NorW at rubredoxin and are transferred sequentially to the FMN center and the di-iron center. Also able to function as an aerobic oxygen reductase. The protein is Anaerobic nitric oxide reductase flavorubredoxin of Aeromonas hydrophila subsp. hydrophila (strain ATCC 7966 / DSM 30187 / BCRC 13018 / CCUG 14551 / JCM 1027 / KCTC 2358 / NCIMB 9240 / NCTC 8049).